A 361-amino-acid polypeptide reads, in one-letter code: Alcohol dehydrogenase 9 (361 aa).

Cys-51, Thr-53, His-73, Cys-104, Cys-107, Cys-110, Cys-118, and Cys-167 together coordinate Zn(2+). An alcohol contacts are provided by Thr-53 and His-73. An NAD(+)-binding site is contributed by Thr-53. Residues 192-197, Lys-221, 278-280, and Lys-356 each bind NAD(+); these read GLGGLG and LGA.

The protein belongs to the zinc-containing alcohol dehydrogenase family. Class-III subfamily. Homodimer. The cofactor is Zn(2+).

The protein is Alcohol dehydrogenase 9 of Catharanthus roseus (Madagascar periwinkle).